The primary structure comprises 650 residues: Rab proteins geranylgeranyltransferase component A 1 (650 aa).

Disordered regions lie at residues 156–208 (IPAE…ETPK) and 603–650 (PAPP…EPSE). The span at 177–190 (ATGKKENSDAKSST) shows a compositional bias: basic and acidic residues. Polar residues predominate over residues 616–634 (DSSQQEVPESSVTPETNSE).

The protein belongs to the Rab GDI family. As to quaternary structure, monomer. Heterotrimer composed of RABGGTA, RABGGTB and CHM; within this trimer, RABGGTA and RABGGTB form the catalytic component B, while CHM (component A) mediates Rab protein binding. Can associate with the Rab GGTase dimer (RGGT or component B) prior to Rab protein binding; the association is stabilized by geranylgeranyl pyrophosphate (GGpp). The CHM:RGGT:Rab complex is destabilized by GGpp. Interacts with RAB1A, RAB1B, RAB7A and RAB27A and mediates their prenylation. Interacts with RAB5A. Interacts with the non-phosphorylated forms of RAB3A, RAB3B, RAB3C, RAB3D, RAB5B, RAB5C RAB8A, RAB8B, RAB10, RAB12, RAB35, and RAB43. Most abundant in the heart, brain, and spleen. Lower levels seen in the lung, liver, muscle and kidney. Extremely low levels seen in the testis.

It is found in the cytoplasm. The protein resides in the cytosol. In terms of biological role, substrate-binding subunit of the Rab geranylgeranyltransferase (GGTase) complex. Binds unprenylated Rab proteins and presents the substrate peptide to the catalytic component B composed of RABGGTA and RABGGTB, and remains bound to it after the geranylgeranyl transfer reaction. The component A is thought to be regenerated by transferring its prenylated Rab back to the donor membrane. Besides, a pre-formed complex consisting of CHM and the Rab GGTase dimer (RGGT or component B) can bind to and prenylate Rab proteins; this alternative pathway is proposed to be the predominant pathway for Rab protein geranylgeranylation. This chain is Rab proteins geranylgeranyltransferase component A 1 (Chm), found in Rattus norvegicus (Rat).